A 200-amino-acid chain; its full sequence is Urease accessory protein UreG (200 aa).

Position 11-18 (11-18 (GPVGSGKT)) interacts with GTP.

This sequence belongs to the SIMIBI class G3E GTPase family. UreG subfamily. In terms of assembly, homodimer. UreD, UreF and UreG form a complex that acts as a GTP-hydrolysis-dependent molecular chaperone, activating the urease apoprotein by helping to assemble the nickel containing metallocenter of UreC. The UreE protein probably delivers the nickel.

The protein resides in the cytoplasm. Facilitates the functional incorporation of the urease nickel metallocenter. This process requires GTP hydrolysis, probably effectuated by UreG. This chain is Urease accessory protein UreG, found in Thermosynechococcus vestitus (strain NIES-2133 / IAM M-273 / BP-1).